Consider the following 59-residue polypeptide: Beta-defensin 134 (59 aa).

Residues 1 to 19 (MKPLLVVFVFLFLWDPVLA) form the signal peptide. Cystine bridges form between C25-C51, C31-C45, and C35-C52.

The protein belongs to the beta-defensin family.

It localises to the secreted. Its function is as follows. Has antibacterial activity. The protein is Beta-defensin 134 (DEFB134) of Pan troglodytes (Chimpanzee).